The sequence spans 208 residues: Ras-related protein M-Ras (208 aa).

GTP contacts are provided by Asp21, Gly22, Gly23, Val24, Gly25, Lys26, Ser27, Ala28, Phe38, Val39, Pro40, Tyr42, Pro44, and Thr45. Ser27 serves as a coordination point for Mg(2+). An Effector region motif is present at residues 42-50; sequence YDPTIEDSY. 2 residues coordinate Mg(2+): Thr45 and Asp67. GTP-binding residues include Gly70, Asn126, Lys127, Asp129, Ser156, Ala157, and Lys158. At Cys205 the chain carries Cysteine methyl ester. Residue Cys205 is the site of S-geranylgeranyl cysteine attachment. A propeptide spans 206–208 (removed in mature form); the sequence is VIL.

This sequence belongs to the small GTPase superfamily. Ras family. Component of the SHOC2-MRAS-PP1c (SMP) holophosphatase complex consisting of SHOC2, GTP-bound M-Ras/MRAS and the catalytic subunit of protein phosphatase 1 (either PPP1CA, PPP1CB or PPP1CC). Interacts (active GTP-bound form) with both SHOC2 and PP1c (all isoforms) to form a tertiary complex; SHOC2 and PP1c preferably bind M-Ras/MRAS, but they also bind K-Ras/KRAS, N-Ras/NRAS and H-Ras/HRAS. Interacts with RGL3. Interacts (active GTP-bound form preferentially) with RGS14. Mg(2+) serves as cofactor. As to expression, expression highly restricted to the brain and heart.

The protein localises to the cell membrane. The catalysed reaction is GTP + H2O = GDP + phosphate + H(+). Signal transducer in the Ras-MAPK signaling pathway that regulates cell proliferation and survival. Core component of the SHOC2-MRAS-PP1c (SMP) holophosphatase complex that regulates the MAPK pathway activation. The formation of the SMP complex only occurs when MRAS is GTP-bound. MRAS has low intrinsic GTPase activity and may require additional factors for activation. The SMP complex specifically dephosphorylates the inhibitory phosphorylation at 'Ser-259' of RAF1 kinase, 'Ser-365' of BRAF kinase and 'Ser-214' of ARAF kinase, stimulating their kinase activities. The chain is Ras-related protein M-Ras (MRAS) from Homo sapiens (Human).